Consider the following 49-residue polypeptide: Large ribosomal subunit protein bL33B (49 aa).

It belongs to the bacterial ribosomal protein bL33 family.

The protein is Large ribosomal subunit protein bL33B of Bacillus anthracis.